We begin with the raw amino-acid sequence, 874 residues long: Alanine--tRNA ligase (874 aa).

Residues His-562, His-566, Cys-665, and His-669 each contribute to the Zn(2+) site.

Belongs to the class-II aminoacyl-tRNA synthetase family. Zn(2+) is required as a cofactor.

The protein resides in the cytoplasm. It carries out the reaction tRNA(Ala) + L-alanine + ATP = L-alanyl-tRNA(Ala) + AMP + diphosphate. Functionally, catalyzes the attachment of alanine to tRNA(Ala) in a two-step reaction: alanine is first activated by ATP to form Ala-AMP and then transferred to the acceptor end of tRNA(Ala). Also edits incorrectly charged Ser-tRNA(Ala) and Gly-tRNA(Ala) via its editing domain. The polypeptide is Alanine--tRNA ligase (Pseudomonas putida (strain ATCC 700007 / DSM 6899 / JCM 31910 / BCRC 17059 / LMG 24140 / F1)).